The sequence spans 622 residues: Pyranose 2-oxidase (622 aa).

Positions methionine 1–histidine 28 are cleaved as a signal peptide. A propeptide spanning residues serine 29–glycine 37 is cleaved from the precursor. Histidine 167 carries the post-translational modification Tele-8alpha-FAD histidine. Positions 449 and 451 each coordinate substrate. The Proton acceptor role is filled by histidine 546. Asparagine 591 is an active-site residue.

It belongs to the GMC oxidoreductase family. As to quaternary structure, homotetramer. FAD serves as cofactor. Post-translationally, not glycosylated.

Its subcellular location is the periplasm. The catalysed reaction is D-glucose + O2 = 2-dehydro-D-glucose + H2O2. Functionally, catalyzes the oxidation of various aldopyranoses and disaccharides on carbon-2 to the corresponding 2-keto sugars concomitant with the reduction of O(2) to H(2)O(2). Plays an important role in lignin degradation of wood rot fungi by supplying the essential cosubstrate H(2)O(2) for the ligninolytic peroxidases, lignin peroxidase and manganese-dependent peroxidase. The preferred substrate is D-glucose which is converted to 2-dehydro-D-glucose, an intermediate of a secondary metabolic pathway leading to the antibiotic cortalcerone. Also acts on D-xylose, together with D-glucose the major sugars derived from wood, on L-sorbose, D-galactose and 1,5-anhydroglucitol, a diagnostic marker of diabetes mellitus. The chain is Pyranose 2-oxidase (p2ox) from Phlebiopsis gigantea (White-rot fungus).